An 83-amino-acid chain; its full sequence is Putative beta-neurotoxin RjAa12f (83 aa).

Residues 1 to 18 (MKILIFIIASFMLIGVEC) form the signal peptide. Positions 19-82 (KEGYPMGRDG…VWDSSTNKCG (64 aa)) constitute an LCN-type CS-alpha/beta domain. 4 disulfide bridges follow: Cys-29/Cys-81, Cys-33/Cys-55, Cys-40/Cys-62, and Cys-44/Cys-64. A propeptide is located at residue Gly-83.

In terms of processing, contains 4 disulfide bonds. Expressed by the venom gland.

It localises to the secreted. Functionally, beta toxins bind voltage-independently at site-4 of sodium channels (Nav) and shift the voltage of activation toward more negative potentials thereby affecting sodium channel activation and promoting spontaneous and repetitive firing. This toxin is lethal to insects (A.domestica). It is not toxic to mice and does not affect mammal F11 sodium channels. The polypeptide is Putative beta-neurotoxin RjAa12f (Rhopalurus junceus (Caribbean blue scorpion)).